The following is a 212-amino-acid chain: Ribosomal RNA large subunit methyltransferase E (212 aa).

Positions 1-26 (MPAERPSVSQKPKNPYKRPDAFTKAA) are disordered. 5 residues coordinate S-adenosyl-L-methionine: G63, W65, D83, D101, and D122. The active-site Proton acceptor is the K162.

Belongs to the class I-like SAM-binding methyltransferase superfamily. RNA methyltransferase RlmE family.

The protein resides in the cytoplasm. It catalyses the reaction uridine(2552) in 23S rRNA + S-adenosyl-L-methionine = 2'-O-methyluridine(2552) in 23S rRNA + S-adenosyl-L-homocysteine + H(+). Its function is as follows. Specifically methylates the uridine in position 2552 of 23S rRNA at the 2'-O position of the ribose in the fully assembled 50S ribosomal subunit. The chain is Ribosomal RNA large subunit methyltransferase E from Sorangium cellulosum (strain So ce56) (Polyangium cellulosum (strain So ce56)).